Consider the following 311-residue polypeptide: Chemotaxis protein CheV3 (311 aa).

The CheW-like domain occupies 13 to 164; it reads EIELVDFRIY…LESILDDLKL (152 aa). The Response regulatory domain occupies 182-308; the sequence is EVLFLDDSKT…FTEEISKILD (127 aa). Residue D241 is modified to 4-aspartylphosphate.

Plays a role in chemotaxis signal transduction system in order to colonize the host stomach. May act as a phosphate sink to control the flow of phosphate to CheAY. The polypeptide is Chemotaxis protein CheV3 (Helicobacter pylori (strain ATCC 700392 / 26695) (Campylobacter pylori)).